Reading from the N-terminus, the 455-residue chain is 3-phosphoshikimate 1-carboxyvinyltransferase (455 aa).

The disordered stretch occupies residues 1–23 (MSHGSNPRPATARKSSDLKGTLR). Positions 28, 29, and 33 each coordinate 3-phosphoshikimate. A phosphoenolpyruvate-binding site is contributed by K28. 2 residues coordinate phosphoenolpyruvate: G100 and R128. S173, Q175, D326, and K353 together coordinate 3-phosphoshikimate. Q175 is a phosphoenolpyruvate binding site. The Proton acceptor role is filled by D326. R357 and R405 together coordinate phosphoenolpyruvate.

Belongs to the EPSP synthase family. As to quaternary structure, monomer.

It is found in the cytoplasm. It catalyses the reaction 3-phosphoshikimate + phosphoenolpyruvate = 5-O-(1-carboxyvinyl)-3-phosphoshikimate + phosphate. Its pathway is metabolic intermediate biosynthesis; chorismate biosynthesis; chorismate from D-erythrose 4-phosphate and phosphoenolpyruvate: step 6/7. Catalyzes the transfer of the enolpyruvyl moiety of phosphoenolpyruvate (PEP) to the 5-hydroxyl of shikimate-3-phosphate (S3P) to produce enolpyruvyl shikimate-3-phosphate and inorganic phosphate. The polypeptide is 3-phosphoshikimate 1-carboxyvinyltransferase (Rhizobium meliloti (strain 1021) (Ensifer meliloti)).